A 564-amino-acid polypeptide reads, in one-letter code: Arrestin domain-containing protein E (564 aa).

Low complexity predominate over residues 74 to 146 (SQQPQSSQPS…NTSNGFSPPN (73 aa)). 2 disordered regions span residues 74–150 (SQQP…LNKN) and 245–286 (ASQP…SFPS). Residues 250-259 (PQQPQQPQPQ) are compositionally biased toward pro residues. Low complexity predominate over residues 260–269 (QPQQQQFQQQ). Residues 270-285 (SYNNNNSTQSMLSSFP) show a composition bias toward polar residues. The 66-residue stretch at 348–413 (DKCAACDALL…PMCFESTTGL (66 aa)) folds into the LIM zinc-binding domain.

This Dictyostelium discoideum (Social amoeba) protein is Arrestin domain-containing protein E (adcE).